The primary structure comprises 297 residues: Release factor glutamine methyltransferase (297 aa).

Residues 134–138 (GTGSG), aspartate 157, and asparagine 200 each bind S-adenosyl-L-methionine. 200 to 203 (NPPY) is a binding site for substrate.

The protein belongs to the protein N5-glutamine methyltransferase family. PrmC subfamily.

The enzyme catalyses L-glutaminyl-[peptide chain release factor] + S-adenosyl-L-methionine = N(5)-methyl-L-glutaminyl-[peptide chain release factor] + S-adenosyl-L-homocysteine + H(+). Functionally, methylates the class 1 translation termination release factors RF1/PrfA and RF2/PrfB on the glutamine residue of the universally conserved GGQ motif. This chain is Release factor glutamine methyltransferase, found in Bradyrhizobium diazoefficiens (strain JCM 10833 / BCRC 13528 / IAM 13628 / NBRC 14792 / USDA 110).